The following is a 1019-amino-acid chain: Limulus clotting factor C (1019 aa).

The N-terminal stretch at 1–25 (MVLASFLVSGLVLGLLAQKMRPVQS) is a signal peptide. Residues 102–137 (YGTWCSGECQCKNGGICDQRTGACACRDRYEGVHCE) enclose the EGF-like domain. Cystine bridges form between Cys106-Cys118, Cys112-Cys125, Cys127-Cys136, Cys142-Cys182, Cys168-Cys195, Cys199-Cys241, Cys227-Cys254, Cys260-Cys308, Cys294-Cys321, Cys331-Cys350, Cys354-Cys374, Cys436-Cys447, Cys464-Cys564, Cys538-Cys556, Cys576-Cys621, Cys607-Cys634, and Cys720-Cys748. Sushi domains are found at residues 140 to 197 (KGCP…KCIR), 198 to 256 (ECAM…QCKN), and 258 to 323 (VFCP…SCVK). The region spanning 325–421 (ADREVDCDSK…EELKSLARSF (97 aa)) is the LCCL domain. Positions 436–568 (CPDGWFEVDE…PSSFACMMDL (133 aa)) constitute a C-type lectin domain. Residues Asn523 and Asn534 are each glycosylated (N-linked (GlcNAc...) asparagine). 2 Sushi domains span residues 574 to 636 (AKCD…RCIK) and 689 to 750 (PRSS…SCIP). Asn624, Asn740, and Asn767 each carry an N-linked (GlcNAc...) asparagine glycan. Residues 763–1019 (IWNGNSTEIG…VFLSWIRQFI (257 aa)) enclose the Peptidase S1 domain. The cysteines at positions 794 and 810 are disulfide-linked. Residues His809 and Asp865 each act as charge relay system in the active site. Asn912 carries N-linked (GlcNAc...) asparagine glycosylation. A disulfide bridge links Cys932 with Cys951. A substrate-binding site is contributed by Asp960. A disulfide bond links Cys962 and Cys996. Catalysis depends on Ser966, which acts as the Charge relay system.

Belongs to the peptidase S1 family. Heterodimer of a light chain and a heavy chain linked by a disulfide bond.

The protein resides in the secreted. The enzyme catalyses Selective cleavage of 103-Arg-|-Ser-104 and 124-Ile-|-Ile-125 bonds in Limulus clotting factor B to form activated factor B. Cleavage of -Pro-Arg-|-Xaa- bonds in synthetic substrates.. Its activity is regulated as follows. Activated by Gram-negative bacterial lipopolysaccharides and chymotrypsin. Its function is as follows. This enzyme is closely associated with an endotoxin-sensitive hemolymph coagulation system which may play important roles in both hemostasis and host defense mechanisms. Its active form catalyzes the activation of factor B. The protein is Limulus clotting factor C of Carcinoscorpius rotundicauda (Mangrove horseshoe crab).